The chain runs to 299 residues: Bifunctional protein FolD (299 aa).

Residues 168–170 (GRS), serine 193, and isoleucine 234 each bind NADP(+).

This sequence belongs to the tetrahydrofolate dehydrogenase/cyclohydrolase family. As to quaternary structure, homodimer.

The catalysed reaction is (6R)-5,10-methylene-5,6,7,8-tetrahydrofolate + NADP(+) = (6R)-5,10-methenyltetrahydrofolate + NADPH. It carries out the reaction (6R)-5,10-methenyltetrahydrofolate + H2O = (6R)-10-formyltetrahydrofolate + H(+). Its pathway is one-carbon metabolism; tetrahydrofolate interconversion. Catalyzes the oxidation of 5,10-methylenetetrahydrofolate to 5,10-methenyltetrahydrofolate and then the hydrolysis of 5,10-methenyltetrahydrofolate to 10-formyltetrahydrofolate. In Brucella anthropi (strain ATCC 49188 / DSM 6882 / CCUG 24695 / JCM 21032 / LMG 3331 / NBRC 15819 / NCTC 12168 / Alc 37) (Ochrobactrum anthropi), this protein is Bifunctional protein FolD.